The primary structure comprises 385 residues: Glucans biosynthesis protein C (385 aa).

10 helical membrane-spanning segments follow: residues 17 to 37, 60 to 80, 91 to 111, 137 to 157, 173 to 193, 212 to 232, 239 to 259, 274 to 294, 311 to 331, and 338 to 358; these read AWLM…SHTW, MQVF…RYPL, VGIP…IMLQ, ISHL…VWIF, KFSM…YAVI, FIVM…LAFI, LFTT…VAYL, TESV…FSFG, ASLF…AYIT, and WLGF…LYEI.

This sequence belongs to the acyltransferase 3 family. OpgC subfamily.

It localises to the cell membrane. It functions in the pathway glycan metabolism; osmoregulated periplasmic glucan (OPG) biosynthesis. In terms of biological role, necessary for the succinyl substitution of periplasmic glucans. Could catalyze the transfer of succinyl residues from the cytoplasmic side of the membrane to the nascent glucan backbones on the periplasmic side of the membrane. The sequence is that of Glucans biosynthesis protein C from Escherichia coli (strain K12 / MC4100 / BW2952).